The primary structure comprises 411 residues: SH3 and cysteine-rich domain-containing protein 2 (411 aa).

The disordered stretch occupies residues 1–29 (MTEMSEKENEPDDAATHSPPGTVSALQET). The segment covering 19–29 (PPGTVSALQET) has biased composition (polar residues). Position 48 is a phosphoserine (Ser-48). The interval 64-95 (TEVLLTPPTPLPPPSPPPTASDRGLATPSPSP) is disordered. Over residues 70-82 (PPTPLPPPSPPPT) the composition is skewed to pro residues. The Phorbol-ester/DAG-type zinc-finger motif lies at 110 to 161 (LHSFQEHVFKRASPCELCHQLIVGNSKQGLRCKMCKVSVHLWCSEEISHQQC). 2 disordered regions span residues 174–203 (SSPL…KVDP) and 219–288 (RSSF…ATLR). Positions 219-232 (RSSFSSTSESPTRS) are enriched in low complexity. 2 consecutive SH3 domains span residues 292–351 (GPMY…RVRP) and 354–411 (NVWR…LTEI).

As to quaternary structure, interacts (via SH3 domains) with CACNA1S. Interacts (via SH3 domains) with CACNA1C. Has much lower affinity for CACNA1C than for CACNA1S.

Its subcellular location is the cytoplasm. It localises to the cytosol. It is found in the cell membrane. The protein resides in the sarcolemma. Its function is as follows. Plays a redundant role in promoting the expression of calcium channel CACNA1S at the cell membrane, and thereby contributes to increased channel activity. Slows down the inactivation rate of the calcium channel CACNA1C. This Homo sapiens (Human) protein is SH3 and cysteine-rich domain-containing protein 2 (STAC2).